A 95-amino-acid chain; its full sequence is N(2)-fixation sustaining protein CowN (95 aa).

The protein belongs to the CowN family.

In terms of biological role, is required to sustain N(2)-dependent growth in the presence of low levels of carbon monoxide (CO). Probably acts by protecting the N(2) fixation ability of the nitrogenase complex, which is inactivated in the presence of CO. This is N(2)-fixation sustaining protein CowN from Allochromatium vinosum (strain ATCC 17899 / DSM 180 / NBRC 103801 / NCIMB 10441 / D) (Chromatium vinosum).